A 24-amino-acid chain; its full sequence is Brevinin-1Pe (24 aa).

Cysteines 18 and 24 form a disulfide.

In terms of tissue distribution, expressed by the skin glands.

It localises to the secreted. Its function is as follows. Antibacterial activity against Gram-positive bacterium S.aureus and Gram-negative bacterium E.coli. Has activity against C.albicans. This chain is Brevinin-1Pe, found in Lithobates pipiens (Northern leopard frog).